We begin with the raw amino-acid sequence, 134 residues long: Lymphocyte antigen 6I (134 aa).

Residues 1 to 21 (MDTSHAIKSCVLILLVTLLCA) form the signal peptide. A UPAR/Ly6 domain is found at 27–105 (LECYQCYGVP…ISCCQEDLCN (79 aa)). 5 disulfide bridges follow: cysteine 29-cysteine 53, cysteine 32-cysteine 41, cysteine 46-cysteine 74, cysteine 78-cysteine 98, and cysteine 99-cysteine 104. A glycan (N-linked (GlcNAc...) asparagine) is linked at asparagine 95. Residue glycine 112 is the site of GPI-anchor amidated glycine attachment. A propeptide spans 113-134 (SSWTTAGVLLFSLGSVLLQTLM) (removed in mature form).

In terms of tissue distribution, expressed in hematopoietic tissue (spleen, thymus, bone marrow). Also found in peritoneal macrophages, peripheral blood leukocytes, liver, heart, brain, kidney and lung.

The protein resides in the cell membrane. This Mus musculus (Mouse) protein is Lymphocyte antigen 6I (Ly6i).